The sequence spans 138 residues: Large ribosomal subunit protein uL13 (138 aa).

Belongs to the universal ribosomal protein uL13 family. Part of the 50S ribosomal subunit.

In terms of biological role, this protein is one of the early assembly proteins of the 50S ribosomal subunit, although it is not seen to bind rRNA by itself. It is important during the early stages of 50S assembly. The sequence is that of Large ribosomal subunit protein uL13 from Picrophilus torridus (strain ATCC 700027 / DSM 9790 / JCM 10055 / NBRC 100828 / KAW 2/3).